A 359-amino-acid polypeptide reads, in one-letter code: Histidinol-phosphate aminotransferase (359 aa).

K217 bears the N6-(pyridoxal phosphate)lysine mark.

Belongs to the class-II pyridoxal-phosphate-dependent aminotransferase family. Histidinol-phosphate aminotransferase subfamily. As to quaternary structure, homodimer. It depends on pyridoxal 5'-phosphate as a cofactor.

The enzyme catalyses L-histidinol phosphate + 2-oxoglutarate = 3-(imidazol-4-yl)-2-oxopropyl phosphate + L-glutamate. It participates in amino-acid biosynthesis; L-histidine biosynthesis; L-histidine from 5-phospho-alpha-D-ribose 1-diphosphate: step 7/9. The chain is Histidinol-phosphate aminotransferase from Salmonella arizonae (strain ATCC BAA-731 / CDC346-86 / RSK2980).